The sequence spans 185 residues: UPF0301 protein HDEF_0602 (185 aa).

The protein belongs to the UPF0301 (AlgH) family.

The polypeptide is UPF0301 protein HDEF_0602 (Hamiltonella defensa subsp. Acyrthosiphon pisum (strain 5AT)).